Reading from the N-terminus, the 434-residue chain is Glutamyl-tRNA reductase 2 (434 aa).

Substrate contacts are provided by residues Thr57–Arg60, Ser113, Asp118–Glu120, and Gln124. Cys58 functions as the Nucleophile in the catalytic mechanism. Residue Gly193–Gly198 participates in NADP(+) binding.

Belongs to the glutamyl-tRNA reductase family. In terms of assembly, homodimer.

It catalyses the reaction (S)-4-amino-5-oxopentanoate + tRNA(Glu) + NADP(+) = L-glutamyl-tRNA(Glu) + NADPH + H(+). The protein operates within porphyrin-containing compound metabolism; protoporphyrin-IX biosynthesis; 5-aminolevulinate from L-glutamyl-tRNA(Glu): step 1/2. Functionally, catalyzes the NADPH-dependent reduction of glutamyl-tRNA(Glu) to glutamate 1-semialdehyde (GSA). The protein is Glutamyl-tRNA reductase 2 of Flavobacterium johnsoniae (strain ATCC 17061 / DSM 2064 / JCM 8514 / BCRC 14874 / CCUG 350202 / NBRC 14942 / NCIMB 11054 / UW101) (Cytophaga johnsonae).